The following is a 395-amino-acid chain: General transcription factor IIH subunit 2 (395 aa).

Positions 60–236 constitute a VWFA domain; the sequence is HLYVVVDGSR…HYKELLTHHV (177 aa). Residue Tyr-95 is modified to Phosphotyrosine. The C4-type zinc-finger motif lies at 291 to 308; it reads CPQCRAKYCELPVECKIC.

Belongs to the GTF2H2 family. As to quaternary structure, component of the TFIID-containing RNA polymerase II pre-initiation complex that is composed of TBP and at least GTF2A1, GTF2A2, GTF2E1, GTF2E2, GTF2F1, GTF2H2, GTF2H3, GTF2H4, GTF2H5, GTF2B, TCEA1, ERCC2 and ERCC3. Component of the 7-subunit TFIIH core complex composed of XPB/ERCC3, XPD/ERCC2, GTF2H1, GTF2H2, GTF2H3, GTF2H4 and GTF2H5, which is active in NER. The core complex associates with the 3-subunit CDK-activating kinase (CAK) module composed of CCNH/cyclin H, CDK7 and MNAT1 to form the 10-subunit holoenzyme (holo-TFIIH) active in transcription. Interacts with XPB, XPD, GTF2H1 and GTF2H3. (Microbial infection) Interacts with varicella-zoster virus IE63 protein. As to expression, widely expressed, with higher expression in skeletal muscle.

It is found in the nucleus. Its function is as follows. Component of the general transcription and DNA repair factor IIH (TFIIH) core complex, which is involved in general and transcription-coupled nucleotide excision repair (NER) of damaged DNA and, when complexed to CAK, in RNA transcription by RNA polymerase II. In NER, TFIIH acts by opening DNA around the lesion to allow the excision of the damaged oligonucleotide and its replacement by a new DNA fragment. In transcription, TFIIH has an essential role in transcription initiation. When the pre-initiation complex (PIC) has been established, TFIIH is required for promoter opening and promoter escape. Phosphorylation of the C-terminal tail (CTD) of the largest subunit of RNA polymerase II by the kinase module CAK controls the initiation of transcription. The N-terminus of GTF2H2 interacts with and regulates XPD whereas an intact C-terminus is required for a successful escape of RNAP II form the promoter. The sequence is that of General transcription factor IIH subunit 2 (GTF2H2) from Homo sapiens (Human).